The sequence spans 72 residues: Translation initiation factor IF-1 (72 aa).

In terms of domain architecture, S1-like spans 1–72 (MAKDDVIEID…DKGRITFRYK (72 aa)).

Belongs to the IF-1 family. Component of the 30S ribosomal translation pre-initiation complex which assembles on the 30S ribosome in the order IF-2 and IF-3, IF-1 and N-formylmethionyl-tRNA(fMet); mRNA recruitment can occur at any time during PIC assembly.

It is found in the cytoplasm. One of the essential components for the initiation of protein synthesis. Stabilizes the binding of IF-2 and IF-3 on the 30S subunit to which N-formylmethionyl-tRNA(fMet) subsequently binds. Helps modulate mRNA selection, yielding the 30S pre-initiation complex (PIC). Upon addition of the 50S ribosomal subunit IF-1, IF-2 and IF-3 are released leaving the mature 70S translation initiation complex. This chain is Translation initiation factor IF-1, found in Campylobacter jejuni subsp. doylei (strain ATCC BAA-1458 / RM4099 / 269.97).